We begin with the raw amino-acid sequence, 93 residues long: Islet amyloid polypeptide (93 aa).

A signal peptide spans 1–23 (MMCISKLPAVLLILSVALNHLRA). Residues 24–35 (TPVRSGSNPQMD) constitute a propeptide that is removed on maturation. A disulfide bridge connects residues C39 and C44. Positions 64 to 93 (LPPTNVGSNTYGKRNAAGDPNRESLDFLLV) are disordered. The residue at position 74 (Y74) is a Tyrosine amide. The propeptide occupies 78 to 93 (NAAGDPNRESLDFLLV). Positions 83-93 (PNRESLDFLLV) are enriched in basic and acidic residues.

It belongs to the calcitonin family. Can form homodimers. Interacts with IDE and INS. Interaction with INS inhibits homodimerization and fibril formation.

Its subcellular location is the secreted. In terms of biological role, amylin/IAPP is a glucoregulatory peptide hormone that plays an important role in the regulation of energy homeostasis. Selectively inhibits insulin-stimulated glucose utilization and glycogen deposition in muscle, while not affecting adipocyte glucose metabolism. IAPP function is mediated by the CALCR-RAMPs (AMYRs) receptor complexes. Amylin can also bind CALCR receptor in the absence of RAMPs, although it is more selective for AMYRs. The chain is Islet amyloid polypeptide from Mus musculus (Mouse).